We begin with the raw amino-acid sequence, 147 residues long: Prefoldin subunit alpha 2 (147 aa).

Belongs to the prefoldin subunit alpha family. Heterohexamer of two alpha and four beta subunits.

It is found in the cytoplasm. Functionally, molecular chaperone capable of stabilizing a range of proteins. Seems to fulfill an ATP-independent, HSP70-like function in archaeal de novo protein folding. In Methanocaldococcus jannaschii (strain ATCC 43067 / DSM 2661 / JAL-1 / JCM 10045 / NBRC 100440) (Methanococcus jannaschii), this protein is Prefoldin subunit alpha 2 (pfdA2).